The chain runs to 196 residues: Small ribosomal subunit protein uS4c (196 aa).

The segment at 17-36 is disordered; that stretch reads ALPGLTRKTPKSGSNLKKKF. The S4 RNA-binding domain occupies 89–169; it reads MRLDNILFRL…LPKHLTIDTL (81 aa).

The protein belongs to the universal ribosomal protein uS4 family. As to quaternary structure, part of the 30S ribosomal subunit. Contacts protein S5. The interaction surface between S4 and S5 is involved in control of translational fidelity.

Its subcellular location is the plastid. It localises to the chloroplast. In terms of biological role, one of the primary rRNA binding proteins, it binds directly to 16S rRNA where it nucleates assembly of the body of the 30S subunit. Its function is as follows. With S5 and S12 plays an important role in translational accuracy. The chain is Small ribosomal subunit protein uS4c (rps4) from Festuca gigantea (Giant fescue).